Consider the following 279-residue polypeptide: Ribose-phosphate pyrophosphokinase (279 aa).

ATP is bound by residues 31 to 33 (DGE) and 88 to 89 (RQ). Mg(2+) contacts are provided by histidine 121 and aspartate 159. Lysine 182 is an active-site residue. Residues arginine 184, aspartate 208, and 212-216 (STGGT) contribute to the D-ribose 5-phosphate site.

It belongs to the ribose-phosphate pyrophosphokinase family. Class III (archaeal) subfamily. Mg(2+) is required as a cofactor.

The protein resides in the cytoplasm. The catalysed reaction is D-ribose 5-phosphate + ATP = 5-phospho-alpha-D-ribose 1-diphosphate + AMP + H(+). Its pathway is metabolic intermediate biosynthesis; 5-phospho-alpha-D-ribose 1-diphosphate biosynthesis; 5-phospho-alpha-D-ribose 1-diphosphate from D-ribose 5-phosphate (route I): step 1/1. Involved in the biosynthesis of the central metabolite phospho-alpha-D-ribosyl-1-pyrophosphate (PRPP) via the transfer of pyrophosphoryl group from ATP to 1-hydroxyl of ribose-5-phosphate (Rib-5-P). This Pyrococcus furiosus (strain ATCC 43587 / DSM 3638 / JCM 8422 / Vc1) protein is Ribose-phosphate pyrophosphokinase.